A 571-amino-acid chain; its full sequence is Sporulation-specific protein 1 (571 aa).

3 disordered regions span residues 1 to 53, 67 to 133, and 482 to 501; these read MRSS…EEDV, MTAF…PYRQ, and KEAK…SQPE. Residues 23–37 are compositionally biased toward basic residues; the sequence is SKQKKPTKFRERMRR. Composition is skewed to polar residues over residues 67-86, 95-121, and 486-499; these read MTAF…NNFF, PVQS…QNPK, and NISS…SISQ. Coiled-coil stretches lie at residues 469-486 and 542-566; these read DQLV…EAKN and ESAS…DENV.

Interacts directly with ADY3. Probable component of a spindle pole body (SPB) complex composed of ADY3, SSP1, DON1, MPC54, SPO21/MPC70, NUD1 and CNM67. In terms of processing, phosphorylated.

The protein resides in the prospore membrane. Involved in the pathway that organizes the shaping and sizing of the prospore membrane (PSM) during sporulation. May be required for the formation of ADY3 and DON1-containing protein coats at the leading edge of the PSMs during meiosis II. The chain is Sporulation-specific protein 1 (SSP1) from Saccharomyces cerevisiae (strain ATCC 204508 / S288c) (Baker's yeast).